A 214-amino-acid polypeptide reads, in one-letter code: Adenylate kinase (214 aa).

10 to 15 (GAGKGT) contributes to the ATP binding site. The NMP stretch occupies residues 30-59 (STGDMFRAAIKEGTELGKQAKALMDEGKLV). AMP contacts are provided by residues T31, R36, 57–59 (KLV), 85–88 (GFPR), and Q92. Residues 122 to 159 (GRRVHQPSGRTYHVVYNPPKVEGKDDVTGEDLIIRQDD) form an LID region. ATP contacts are provided by residues R123 and 132 to 133 (TY). R156 and R167 together coordinate AMP. An ATP-binding site is contributed by K200.

The protein belongs to the adenylate kinase family. In terms of assembly, monomer.

The protein localises to the cytoplasm. It catalyses the reaction AMP + ATP = 2 ADP. The protein operates within purine metabolism; AMP biosynthesis via salvage pathway; AMP from ADP: step 1/1. Catalyzes the reversible transfer of the terminal phosphate group between ATP and AMP. Plays an important role in cellular energy homeostasis and in adenine nucleotide metabolism. This Actinobacillus pleuropneumoniae serotype 5b (strain L20) protein is Adenylate kinase.